The chain runs to 147 residues: Ribonuclease 4 (147 aa).

The first 28 residues, 1–28, serve as a signal peptide directing secretion; it reads MDIQRTQSLLLLLLLTLLGLGLVQPSYG. Q29 carries the post-translational modification Pyrrolidone carboxylic acid. Residues R35, H40, K68, N71, and T72 each coordinate dUMP. The active-site Proton acceptor is the H40. 4 disulfides stabilise this stretch: C53–C109, C67–C120, C85–C135, and C92–C99. The active-site Proton donor is H144. A dUMP-binding site is contributed by F145.

It belongs to the pancreatic ribonuclease family.

The protein localises to the secreted. Functionally, cleaves preferentially after uridine bases. Has antimicrobial activity against uropathogenic E.coli (UPEC). Probably contributes to urinary tract sterility. The sequence is that of Ribonuclease 4 (Rnase4) from Rattus norvegicus (Rat).